The sequence spans 480 residues: Protein nucleotidyltransferase YdiU (480 aa).

ATP contacts are provided by Gly86, Gly88, Arg89, Lys109, Asp121, Gly122, Arg172, and Arg179. Asp248 serves as the catalytic Proton acceptor. Asn249 and Asp258 together coordinate Mg(2+). Asp258 contributes to the ATP binding site.

The protein belongs to the SELO family. Mg(2+) serves as cofactor. Requires Mn(2+) as cofactor.

It carries out the reaction L-seryl-[protein] + ATP = 3-O-(5'-adenylyl)-L-seryl-[protein] + diphosphate. It catalyses the reaction L-threonyl-[protein] + ATP = 3-O-(5'-adenylyl)-L-threonyl-[protein] + diphosphate. The enzyme catalyses L-tyrosyl-[protein] + ATP = O-(5'-adenylyl)-L-tyrosyl-[protein] + diphosphate. The catalysed reaction is L-histidyl-[protein] + UTP = N(tele)-(5'-uridylyl)-L-histidyl-[protein] + diphosphate. It carries out the reaction L-seryl-[protein] + UTP = O-(5'-uridylyl)-L-seryl-[protein] + diphosphate. It catalyses the reaction L-tyrosyl-[protein] + UTP = O-(5'-uridylyl)-L-tyrosyl-[protein] + diphosphate. Its function is as follows. Nucleotidyltransferase involved in the post-translational modification of proteins. It can catalyze the addition of adenosine monophosphate (AMP) or uridine monophosphate (UMP) to a protein, resulting in modifications known as AMPylation and UMPylation. In Salmonella paratyphi A (strain ATCC 9150 / SARB42), this protein is Protein nucleotidyltransferase YdiU.